The primary structure comprises 332 residues: MGDSLWRYYFGVLVIACKVNLSRALILDSIYWNTTNTKFVPGQGLVLYPQIGDKMDIVCPRVEGGSMEGVEYYKLYMVPLEQLKSCQVTKADTPLLNCVKPDQDVKFTLKFQEFSPNLWGLEFFRGKDYYIISTSNGTMEGLDNQEGGVCKTKSMKIIMKVGQNPSDPISPKDYPTSYPPKHPDLGGKDSKSNEVLKPDASPHGEDKGDGNKSSSVIGSEVALFACIASASVIVIIIIIMLVFLLLKYRRRHRKHSPQHATTLSLSTLATPKRGGSGGNNNGSEPSDIIIPLRTADSVFCPHYEKVSGDYGHPVYIVQEMPPQSPANIYYKV.

Residues 1–24 (MGDSLWRYYFGVLVIACKVNLSRA) form the signal peptide. Residues Asn20 and Asn33 are each glycosylated (N-linked (GlcNAc...) asparagine). Residues 25 to 161 (LILDSIYWNT…TKSMKIIMKV (137 aa)) form the Ephrin RBD domain. Over 25–225 (LILDSIYWNT…VIGSEVALFA (201 aa)) the chain is Extracellular. Intrachain disulfides connect Cys59-Cys98 and Cys86-Cys150. A glycan (N-linked (GlcNAc...) asparagine) is linked at Asn136. The segment at 162 to 212 (GQNPSDPISPKDYPTSYPPKHPDLGGKDSKSNEVLKPDASPHGEDKGDGNK) is disordered. Positions 181–210 (KHPDLGGKDSKSNEVLKPDASPHGEDKGDG) are enriched in basic and acidic residues. A glycan (N-linked (GlcNAc...) asparagine) is linked at Asn211. A helical membrane pass occupies residues 226-246 (CIASASVIVIIIIIMLVFLLL). At 247-332 (KYRRRHRKHS…QSPANIYYKV (86 aa)) the chain is on the cytoplasmic side. The tract at residues 255-285 (HSPQHATTLSLSTLATPKRGGSGGNNNGSEP) is disordered. The span at 260 to 270 (ATTLSLSTLAT) shows a compositional bias: low complexity. Residues 330-332 (YKV) carry the PDZ-binding motif.

The protein belongs to the ephrin family. As to quaternary structure, binds to the receptor tyrosine kinase ephb4. Inducible phosphorylation of tyrosine residues in the cytoplasmic domain.

The protein resides in the cell membrane. Functionally, cell surface transmembrane ligand for Eph receptors, a family of receptor tyrosine kinases which are crucial for migration, repulsion and adhesion during neuronal, vascular and epithelial development. Binds promiscuously Eph receptors residing on adjacent cells, leading to contact-dependent bidirectional signaling into neighboring cells. The signaling pathway downstream of the receptor is referred to as forward signaling while the signaling pathway downstream of the ephrin ligand is referred to as reverse signaling. Together with ephb4 may play a central role in heart morphogenesis and angiogenesis through regulation of cell adhesion and cell migration. This Danio rerio (Zebrafish) protein is Ephrin-B2a (efnb2a).